The sequence spans 1292 residues: Zinc finger protein 423 (1292 aa).

The segment covering 1 to 11 (MSRRKQAKPRS) has biased composition (basic residues). 3 disordered regions span residues 1-21 (MSRR…EASD), 33-70 (AGGL…EDVE), and 95-125 (AHRC…SPTQ). Residues 41-54 (ECDRKTSRALEDRN) show a composition bias toward basic and acidic residues. 2 positions are modified to phosphoserine: S55 and S58. The segment at 75-101 (YTCDHCQQDFESLADLTDHRAHRCPGD) adopts a C2H2-type 1; degenerate zinc-finger fold. A compositionally biased stretch (polar residues) spans 110-125 (WVASSPSSKDVASPTQ). C2H2-type zinc fingers lie at residues 146-168 (YPCQ…EQIH), 174-196 (FKCT…IKLH), 202-224 (YHCH…LKTH), 230-252 (FKCS…MQAH), 271-294 (FMCD…LTLH), 303-326 (LQCI…HQAH), and 331-353 (HKCP…LDSH). Residues 354–407 (RQPDSSNHSVSPDPVLGSVASMSSATPDSSASVERGSTPDSTLKPLRGQKKMRD) form a disordered region. A compositionally biased stretch (low complexity) spans 371-385 (SVASMSSATPDSSAS). The C2H2-type 9; degenerate zinc finger occupies 417-441 (YSCPYCSKRDFTSLAVLEIHLKTIH). C2H2-type zinc fingers lie at residues 449 to 472 (HTCQ…RKLH), 488 to 511 (FHCN…RVSH), and 525 to 548 (FFCN…QQAH). The segment at 571 to 596 (YSCPYCTNSPIFGSILKLTKHIKENH) adopts a C2H2-type 13; atypical zinc-finger fold. Residues 598–635 (NIPLAHSKKSKAEQSPVSSDVEVSSPKRQRLSGSANSI) form a disordered region. S612 carries the phosphoserine modification. Positions 612–623 (SPVSSDVEVSSP) are enriched in low complexity. 7 consecutive C2H2-type zinc fingers follow at residues 640-662 (YPCN…LKLH), 670-692 (QACP…LTVH), 700-723 (YVCE…LDMH), 728-751 (YHCT…AVKH), 758-781 (YRCT…KHSH), 789-811 (HKCI…ITTH), and 815-838 (YNCR…REKH). The C2H2-type 21; degenerate zinc finger occupies 894–916 (YGCDICGAAYTMEVLLQNHRLRD). 3 C2H2-type zinc fingers span residues 938–960 (HKCN…LQTH), 967–989 (YMCP…KVTH), and 1028–1050 (FRCV…GTFH). S1062 carries the post-translational modification Phosphoserine. A C2H2-type 25; degenerate zinc finger spans residues 1072–1090 (YKCALCLKEFRSKQDLVRL). C2H2-type zinc fingers lie at residues 1128–1151 (LRCP…QVDH), 1176–1198 (YQCI…VANH), 1206–1228 (HECK…LIEH), 1237–1260 (FKCP…FAVH), and 1267–1290 (YDCS…MSQH). Residues 1144 to 1155 (ESHMQVDHRDLT) are compositionally biased toward basic and acidic residues. Residues 1144-1171 (ESHMQVDHRDLTPETSGPRKGAQTSPVP) are disordered.

Belongs to the krueppel C2H2-type zinc-finger protein family. Homodimer. Interacts with SMAD1 and SMAD4. Interacts with EBF1. Interacts with PARP1. Interacts with CEP290. Within the cerebellum, Zfp423 is expressed in both ventricular and external germinal zones. Transiently expressed in newly differentiating olfactory-receptor neurons.

The protein localises to the nucleus. Transcription factor that can both act as an activator or a repressor depending on the context. Plays a central role in BMP signaling and olfactory neurogenesis. Associates with SMADs in response to BMP2 leading to activate transcription of BMP target genes. Acts as a transcriptional repressor via its interaction with EBF1, a transcription factor involved in terminal olfactory receptor neurons differentiation; this interaction preventing EBF1 to bind DNA and activate olfactory-specific genes. Involved in olfactory neurogenesis by participating in a developmental switch that regulates the transition from differentiation to maturation in olfactory receptor neurons. Controls proliferation and differentiation of neural precursors in cerebellar vermis formation. This Mus musculus (Mouse) protein is Zinc finger protein 423 (Znf423).